We begin with the raw amino-acid sequence, 36 residues long: Photosystem I reaction center subunit VIII (36 aa).

Residues Ile-9–Tyr-29 traverse the membrane as a helical segment.

This sequence belongs to the PsaI family.

Its subcellular location is the plastid. The protein resides in the chloroplast thylakoid membrane. Functionally, may help in the organization of the PsaL subunit. In Tupiella akineta (Green alga), this protein is Photosystem I reaction center subunit VIII.